The sequence spans 350 residues: tRNA uridine(34) hydroxylase (350 aa).

A Rhodanese domain is found at aspartate 146–leucine 240. Cysteine 200 acts as the Cysteine persulfide intermediate in catalysis. A compositionally biased stretch (basic and acidic residues) spans arginine 319 to glycine 328. Positions arginine 319 to glutamate 350 are disordered.

It belongs to the TrhO family.

It carries out the reaction uridine(34) in tRNA + AH2 + O2 = 5-hydroxyuridine(34) in tRNA + A + H2O. Its function is as follows. Catalyzes oxygen-dependent 5-hydroxyuridine (ho5U) modification at position 34 in tRNAs. This chain is tRNA uridine(34) hydroxylase, found in Salmonella typhimurium (strain LT2 / SGSC1412 / ATCC 700720).